A 329-amino-acid chain; its full sequence is Beta-ketoacyl-[acyl-carrier-protein] synthase III (329 aa).

Active-site residues include Cys123 and His256. The interval 257–261 (QANIR) is ACP-binding. The active site involves Asn286.

Belongs to the thiolase-like superfamily. FabH family. As to quaternary structure, homodimer.

The protein resides in the cytoplasm. The catalysed reaction is malonyl-[ACP] + acetyl-CoA + H(+) = 3-oxobutanoyl-[ACP] + CO2 + CoA. Its pathway is lipid metabolism; fatty acid biosynthesis. Functionally, catalyzes the condensation reaction of fatty acid synthesis by the addition to an acyl acceptor of two carbons from malonyl-ACP. Catalyzes the first condensation reaction which initiates fatty acid synthesis and may therefore play a role in governing the total rate of fatty acid production. Possesses both acetoacetyl-ACP synthase and acetyl transacylase activities. Its substrate specificity determines the biosynthesis of branched-chain and/or straight-chain of fatty acids. This is Beta-ketoacyl-[acyl-carrier-protein] synthase III from Burkholderia vietnamiensis (strain G4 / LMG 22486) (Burkholderia cepacia (strain R1808)).